Reading from the N-terminus, the 429-residue chain is Adenylosuccinate synthetase (429 aa).

Residues 13–19 and 41–43 each bind GTP; these read GDEGKGK and GHT. Aspartate 14 functions as the Proton acceptor in the catalytic mechanism. Mg(2+) is bound by residues aspartate 14 and glycine 41. Residues 14–17, 39–42, threonine 130, arginine 144, glutamine 224, threonine 239, and arginine 303 each bind IMP; these read DEGK and NAGH. Histidine 42 serves as the catalytic Proton donor. 299–305 is a binding site for substrate; it reads ATTGRAR. GTP contacts are provided by residues arginine 305, 331 to 333, and 412 to 414; these read KLD and STG.

The protein belongs to the adenylosuccinate synthetase family. As to quaternary structure, homodimer. Mg(2+) is required as a cofactor.

Its subcellular location is the cytoplasm. The catalysed reaction is IMP + L-aspartate + GTP = N(6)-(1,2-dicarboxyethyl)-AMP + GDP + phosphate + 2 H(+). It functions in the pathway purine metabolism; AMP biosynthesis via de novo pathway; AMP from IMP: step 1/2. Functionally, plays an important role in the de novo pathway of purine nucleotide biosynthesis. Catalyzes the first committed step in the biosynthesis of AMP from IMP. The chain is Adenylosuccinate synthetase from Psychrobacter sp. (strain PRwf-1).